A 106-amino-acid chain; its full sequence is Large ribosomal subunit protein uL23 (106 aa).

Belongs to the universal ribosomal protein uL23 family. As to quaternary structure, part of the 50S ribosomal subunit. Contacts protein L29, and trigger factor when it is bound to the ribosome.

One of the early assembly proteins it binds 23S rRNA. One of the proteins that surrounds the polypeptide exit tunnel on the outside of the ribosome. Forms the main docking site for trigger factor binding to the ribosome. The sequence is that of Large ribosomal subunit protein uL23 from Acinetobacter baumannii (strain AB307-0294).